Reading from the N-terminus, the 230-residue chain is Demethylmenaquinone methyltransferase (230 aa).

Residues T62, D80, 100 to 101 (DA), and S117 contribute to the S-adenosyl-L-methionine site.

Belongs to the class I-like SAM-binding methyltransferase superfamily. MenG/UbiE family.

It carries out the reaction a 2-demethylmenaquinol + S-adenosyl-L-methionine = a menaquinol + S-adenosyl-L-homocysteine + H(+). The protein operates within quinol/quinone metabolism; menaquinone biosynthesis; menaquinol from 1,4-dihydroxy-2-naphthoate: step 2/2. In terms of biological role, methyltransferase required for the conversion of demethylmenaquinol (DMKH2) to menaquinol (MKH2). In Mycobacterium sp. (strain JLS), this protein is Demethylmenaquinone methyltransferase.